The sequence spans 60 residues: Large ribosomal subunit protein uL30 (60 aa).

Belongs to the universal ribosomal protein uL30 family. As to quaternary structure, part of the 50S ribosomal subunit.

This chain is Large ribosomal subunit protein uL30, found in Streptococcus uberis (strain ATCC BAA-854 / 0140J).